We begin with the raw amino-acid sequence, 132 residues long: Guanyl-specific ribonuclease C2 (132 aa).

The N-terminal stretch at 1–26 is a signal peptide; that stretch reads MLYNKLITIAALLVPALAAPQGLDVR. Cystine bridges form between C28/C36 and C32/C129. Residue H66 is part of the active site. E84 functions as the Proton acceptor in the catalytic mechanism. The active-site Proton donor is H118.

It belongs to the ribonuclease N1/T1 family.

It localises to the secreted. It catalyses the reaction [RNA] containing guanosine + H2O = an [RNA fragment]-3'-guanosine-3'-phosphate + a 5'-hydroxy-ribonucleotide-3'-[RNA fragment].. This Aspergillus clavatus (strain ATCC 1007 / CBS 513.65 / DSM 816 / NCTC 3887 / NRRL 1 / QM 1276 / 107) protein is Guanyl-specific ribonuclease C2.